Reading from the N-terminus, the 219-residue chain is ATP-dependent Clp protease proteolytic subunit 1 (219 aa).

The active-site Nucleophile is the serine 113. Histidine 138 is an active-site residue.

Belongs to the peptidase S14 family. In terms of assembly, fourteen ClpP subunits assemble into 2 heptameric rings which stack back to back to give a disk-like structure with a central cavity, resembling the structure of eukaryotic proteasomes.

It is found in the cytoplasm. The enzyme catalyses Hydrolysis of proteins to small peptides in the presence of ATP and magnesium. alpha-casein is the usual test substrate. In the absence of ATP, only oligopeptides shorter than five residues are hydrolyzed (such as succinyl-Leu-Tyr-|-NHMec, and Leu-Tyr-Leu-|-Tyr-Trp, in which cleavage of the -Tyr-|-Leu- and -Tyr-|-Trp bonds also occurs).. In terms of biological role, cleaves peptides in various proteins in a process that requires ATP hydrolysis. Has a chymotrypsin-like activity. Plays a major role in the degradation of misfolded proteins. Probably partially responsible for degradation of ECF sigma factor SigR prime. The polypeptide is ATP-dependent Clp protease proteolytic subunit 1 (Streptomyces coelicolor (strain ATCC BAA-471 / A3(2) / M145)).